The following is a 913-amino-acid chain: DNA repair endonuclease XPF (913 aa).

Residues 1–454 are helicase-like; that stretch reads MDRGISAVRK…EVWVNLRKGD (454 aa). Leucine-zipper stretches follow at residues 233 to 254 and 270 to 298; these read LNAC…DLSL and LDPL…LQYL. Position 289 is an N6-acetyllysine (K289). Over residues 453-476 the composition is skewed to basic and acidic residues; sequence GDGPKRTMKSDKRPKDTKNKERAS. Disordered stretches follow at residues 453–525 and 638–677; these read GDGP…CGGE and VVPE…HNGT. Residues 483–488 carry the Nuclear localization signal motif; that stretch reads KRKKRE. A compositionally biased stretch (acidic residues) spans 500–509; sequence EPPEEGAAEE. S518 carries the post-translational modification Phosphoserine. The span at 638-649 shows a compositional bias: basic and acidic residues; that stretch reads VVPEEREGRDET. Residues 655 to 810 are nuclease; it reads RGTVSTDAPA…PSPHATAELF (156 aa). In terms of domain architecture, ERCC4 spans 680–760; the sequence is SIVVDMREFR…RPVLLIEFDA (81 aa). Residues 834 to 902 are hhH2, dimerization with ERCC1; the sequence is TLPESDKYNP…QLYDFLHTAY (69 aa).

Belongs to the XPF family. As to quaternary structure, heterodimer composed of ERCC1 and ERCC4/XPF. Interacts with SLX4/BTBD12; this interaction is direct and links the ERCC1-ERCC4/XPF complex to SLX4, which may coordinate the action of the structure-specific endonuclease during DNA repair. Requires Mg(2+) as cofactor.

Its subcellular location is the nucleus. It localises to the chromosome. Catalytic component of a structure-specific DNA repair endonuclease responsible for the 5-prime incision during DNA repair, and which is essential for nucleotide excision repair (NER) and interstrand cross-link (ICL) repair. The protein is DNA repair endonuclease XPF of Cricetulus griseus (Chinese hamster).